A 539-amino-acid chain; its full sequence is Serine/threonine-protein kinase BUR1 (539 aa).

Residues 1-15 (MEKLSETTPNGTSPR) are compositionally biased toward polar residues. The interval 1–27 (MEKLSETTPNGTSPRTFALNHSRPRSS) is disordered. One can recognise a Protein kinase domain in the interval 37–339 (YELLGKLGEG…AVDALQHPWF (303 aa)). Residues 43 to 51 (LGEGTFGEV) and lysine 66 each bind ATP. The active-site Proton acceptor is the aspartate 169. Residues 370 to 539 (AALPPAPKGG…DRPDHNGYRR (170 aa)) are disordered. 3 stretches are compositionally biased toward basic and acidic residues: residues 414-428 (NGPD…RERG), 471-514 (NRDD…DRGT), and 521-539 (PRHD…GYRR).

This sequence belongs to the protein kinase superfamily. CMGC Ser/Thr protein kinase family. CDC2/CDKX subfamily.

It is found in the nucleus. The catalysed reaction is L-seryl-[protein] + ATP = O-phospho-L-seryl-[protein] + ADP + H(+). It carries out the reaction L-threonyl-[protein] + ATP = O-phospho-L-threonyl-[protein] + ADP + H(+). It catalyses the reaction [DNA-directed RNA polymerase] + ATP = phospho-[DNA-directed RNA polymerase] + ADP + H(+). Its function is as follows. Serine/threonine-protein kinase involved in transcription regulation. Phosphorylates the UBC2/RAD6 ubiquitin-conjugating enzyme (E2), leading to monoubiquitination of histone H2B and the silencing of telomeric-associated genes. Also required for histone H3 methylation. Necessary for the recovery from pheromone-induced growth arrest in the cell cycle G1 phase. The polypeptide is Serine/threonine-protein kinase BUR1 (BUR1) (Gibberella zeae (strain ATCC MYA-4620 / CBS 123657 / FGSC 9075 / NRRL 31084 / PH-1) (Wheat head blight fungus)).